Reading from the N-terminus, the 487-residue chain is NADH-quinone oxidoreductase subunit N (487 aa).

The next 13 membrane-spanning stretches (helical) occupy residues leucine 7–threonine 27, leucine 37–leucine 57, phenylalanine 81–phenylalanine 101, proline 112–isoleucine 132, phenylalanine 166–phenylalanine 186, alanine 207–phenylalanine 227, glycine 237–leucine 257, isoleucine 276–threonine 296, isoleucine 307–alanine 327, leucine 329–leucine 349, leucine 373–phenylalanine 393, aspartate 407–isoleucine 427, and valine 452–leucine 472.

Belongs to the complex I subunit 2 family. NDH-1 is composed of 14 different subunits. Subunits NuoA, H, J, K, L, M, N constitute the membrane sector of the complex.

Its subcellular location is the cell inner membrane. It catalyses the reaction a quinone + NADH + 5 H(+)(in) = a quinol + NAD(+) + 4 H(+)(out). In terms of biological role, NDH-1 shuttles electrons from NADH, via FMN and iron-sulfur (Fe-S) centers, to quinones in the respiratory chain. The immediate electron acceptor for the enzyme in this species is believed to be ubiquinone. Couples the redox reaction to proton translocation (for every two electrons transferred, four hydrogen ions are translocated across the cytoplasmic membrane), and thus conserves the redox energy in a proton gradient. The chain is NADH-quinone oxidoreductase subunit N from Erythrobacter litoralis (strain HTCC2594).